A 235-amino-acid chain; its full sequence is Ion-translocating oxidoreductase complex subunit E (235 aa).

A run of 5 helical transmembrane segments spans residues 63–83, 93–113, 117–137, 152–172, and 206–226; these read LGLGLATMLVLTCTNTVISLF, IPIYVMIIATTVTAVQLLMNA, TLYQSLGIFIPLIVTNCIIIG, IWDGFSMGLGMALSLTILGAL, and SFLLFILPPGAFIGLGLLLAI.

The protein belongs to the NqrDE/RnfAE family. The complex is composed of six subunits: RnfA, RnfB, RnfC, RnfD, RnfE and RnfG.

Its subcellular location is the cell inner membrane. Its function is as follows. Part of a membrane-bound complex that couples electron transfer with translocation of ions across the membrane. The protein is Ion-translocating oxidoreductase complex subunit E of Haemophilus influenzae (strain ATCC 51907 / DSM 11121 / KW20 / Rd).